The primary structure comprises 564 residues: Copine-8 (564 aa).

C2 domains follow at residues 1-133 and 142-265; these read MDSR…RLEK and KCGT…FNVY. Ca(2+) is bound by residues aspartate 39, aspartate 45, aspartate 99, aspartate 101, serine 104, lysine 109, aspartate 111, aspartate 173, aspartate 179, aspartate 235, aspartate 237, and aspartate 243. Serine 260 bears the Phosphoserine mark. Positions 309 to 510 constitute a VWFA domain; it reads NFTVAIDFTA…VQFVPFRDYI (202 aa).

Belongs to the copine family. It depends on Ca(2+) as a cofactor.

Its function is as follows. Probable calcium-dependent phospholipid-binding protein that may play a role in calcium-mediated intracellular processes. In Homo sapiens (Human), this protein is Copine-8.